Consider the following 179-residue polypeptide: Large ribosomal subunit protein uL6 (179 aa).

It belongs to the universal ribosomal protein uL6 family. In terms of assembly, part of the 50S ribosomal subunit.

Functionally, this protein binds to the 23S rRNA, and is important in its secondary structure. It is located near the subunit interface in the base of the L7/L12 stalk, and near the tRNA binding site of the peptidyltransferase center. The sequence is that of Large ribosomal subunit protein uL6 from Clostridium novyi (strain NT).